Here is a 281-residue protein sequence, read N- to C-terminus: Elongation factor Ts (281 aa).

The interval 79-82 (TDFV) is involved in Mg(2+) ion dislocation from EF-Tu.

The protein belongs to the EF-Ts family.

It localises to the cytoplasm. Its function is as follows. Associates with the EF-Tu.GDP complex and induces the exchange of GDP to GTP. It remains bound to the aminoacyl-tRNA.EF-Tu.GTP complex up to the GTP hydrolysis stage on the ribosome. The sequence is that of Elongation factor Ts from Wolbachia pipientis subsp. Culex pipiens (strain wPip).